The chain runs to 690 residues: Cyclic nucleotide-gated channel alpha-1 (690 aa).

Residues 1–163 lie on the Cytoplasmic side of the membrane; it reads MKKVIINTWH…VVIDPSGNTY (163 aa). Disordered regions lie at residues 33–76 and 88–151; these read GACS…PSQR and NVNN…EEKK. The segment covering 40 to 54 has biased composition (acidic residues); that stretch reads GDDDDSASMFEESET. The span at 64–76 shows a compositional bias: polar residues; that stretch reads RSNTHGSGQPSQR. The span at 111–151 shows a compositional bias: basic and acidic residues; the sequence is SKPDDKNENKKDPEKKKKKEKDKDKKKKEEKGKDKKEEEKK. A helical membrane pass occupies residues 164–185; that stretch reads YNWLFCITLPVMYNWTMIIARA. Over 186 to 195 the chain is Extracellular; sequence CFDELQSDYL. A helical transmembrane segment spans residues 196 to 215; that stretch reads EYWLAFDYLSDVVYLLDMFV. The Cytoplasmic portion of the chain corresponds to 216–241; the sequence is RTRTGYLEQGLLVKEERKLIDKYKST. The helical transmembrane segment at 242–251 threads the bilayer; the sequence is FQFKLDVLSV. Residues 252–264 are Extracellular-facing; sequence IPTDLLYIKFGWN. Residues 265–283 form a helical membrane-spanning segment; sequence YPEIRLNRLLRISRMFEFF. The Cytoplasmic segment spans residues 284-291; sequence QRTETRTN. Residues 292–315 traverse the membrane as a helical segment; that stretch reads YPNIFRISNLVMYIIIIIHWNACV. Positions 293–402 are ion conduction pathway; that stretch reads PNIFRISNLV…NIGSMISNMN (110 aa). Topologically, residues 316-342 are extracellular; that stretch reads YFSISKAIGFGNDTWVYPDVNDPDFGR. A glycan (N-linked (GlcNAc...) asparagine) is linked at Asn327. 2 helical membrane-spanning segments follow: residues 343–373 and 374–399; these read LARKYVYSLYWSTLTLTTIGETPPPVRDSEY and FFVVADFLIGVLIFATIVGNIGSMIS. The selectivity filter stretch occupies residues 360 to 363; that stretch reads TIGE. Residues 400 to 690 are Cytoplasmic-facing; that stretch reads NMNAARAEFQ…ESGPTDSTQD (291 aa). The tract at residues 403-479 is C-linker; sequence AARAEFQARI…DTLKKVRIFA (77 aa). The segment at 482–603 is cyclic nucleotide-binding domain (CNBD); that stretch reads EAGLLVELVL…EEKGKQILMK (122 aa). 4 residues coordinate 3',5'-cyclic GMP: Gly543, Ser546, Arg559, and Thr560. The 3',5'-cyclic AMP site is built by Arg559 and Thr560. Residues 621-664 are a coiled coil; the sequence is LEEKVTRMESSVDLLQTRFARILAEYESMQQKLKQRLTKVEKFL.

This sequence belongs to the cyclic nucleotide-gated cation channel (TC 1.A.1.5) family. CNGA1 subfamily. Forms a heterotetramer with CNGB1 in a 3:1 ratio. May also form cyclic nucleotide-activated homotetrameric channels, that are efficiently activated by saturating cGMP, but poorly activated by saturating cAMP compared to the heterotetramer with CNGB1. The channel binds Ca(2+)-bound CALM1 via CaM1 and CaM2 regions of the CNGB1 subunit; this interaction modulates the affinity of the channel for cNMPs in response to intracellular Ca(2+) levels. As to expression, expressed in the retina, in rod cells (at protein level).

The protein resides in the cell membrane. The catalysed reaction is Ca(2+)(in) = Ca(2+)(out). It catalyses the reaction Na(+)(in) = Na(+)(out). It carries out the reaction K(+)(in) = K(+)(out). The enzyme catalyses NH4(+)(in) = NH4(+)(out). The catalysed reaction is Rb(+)(in) = Rb(+)(out). It catalyses the reaction Li(+)(in) = Li(+)(out). It carries out the reaction Cs(+)(in) = Cs(+)(out). In terms of biological role, pore-forming subunit of the rod cyclic nucleotide-gated channel. Mediates rod photoresponses at dim light converting transient changes in intracellular cGMP levels into electrical signals. In the dark, cGMP levels are high and keep the channel open enabling a steady inward current carried by Na(+) and Ca(2+) ions that leads to membrane depolarization and neurotransmitter release from synaptic terminals. Upon photon absorption cGMP levels decline leading to channel closure and membrane hyperpolarization that ultimately slows neurotransmitter release and signals the presence of light, the end point of the phototransduction cascade. Conducts cGMP- and cAMP-gated ion currents, with permeability for monovalent and divalent cations. The selectivity for Ca(2+) over Na(+) increases with cGMP concentrations, whereas the selectivity among monovalent ions is independent of the cGMP levels. The sequence is that of Cyclic nucleotide-gated channel alpha-1 from Bos taurus (Bovine).